Reading from the N-terminus, the 262-residue chain is Octopine permease ATP-binding protein P (262 aa).

One can recognise an ABC transporter domain in the interval 9-254; the sequence is VKLTGIRKNF…PRTERFRQFL (246 aa). 41-48 provides a ligand contact to ATP; sequence GSSGSGKS.

It belongs to the ABC transporter superfamily.

The protein localises to the cell inner membrane. In terms of biological role, component of the octopine active transport system probably consisting of four subunits: Q, M, P and T. In Rhizobium meliloti (Ensifer meliloti), this protein is Octopine permease ATP-binding protein P (occP).